Consider the following 226-residue polypeptide: Ribose-5-phosphate isomerase A (226 aa).

Substrate contacts are provided by residues 33 to 36 (TGST), 86 to 89 (DGAD), and 99 to 102 (KGGG). Glutamate 108 (proton acceptor) is an active-site residue. Lysine 126 is a substrate binding site.

Belongs to the ribose 5-phosphate isomerase family. As to quaternary structure, homodimer.

The enzyme catalyses aldehydo-D-ribose 5-phosphate = D-ribulose 5-phosphate. It functions in the pathway carbohydrate degradation; pentose phosphate pathway; D-ribose 5-phosphate from D-ribulose 5-phosphate (non-oxidative stage): step 1/1. In terms of biological role, catalyzes the reversible conversion of ribose-5-phosphate to ribulose 5-phosphate. The sequence is that of Ribose-5-phosphate isomerase A from Bordetella bronchiseptica (strain ATCC BAA-588 / NCTC 13252 / RB50) (Alcaligenes bronchisepticus).